The following is a 179-amino-acid chain: Peptide deformylase (179 aa).

Fe cation is bound by residues C103 and H145. E146 is a catalytic residue. H149 is a binding site for Fe cation.

The protein belongs to the polypeptide deformylase family. The cofactor is Fe(2+).

The enzyme catalyses N-terminal N-formyl-L-methionyl-[peptide] + H2O = N-terminal L-methionyl-[peptide] + formate. Functionally, removes the formyl group from the N-terminal Met of newly synthesized proteins. Requires at least a dipeptide for an efficient rate of reaction. N-terminal L-methionine is a prerequisite for activity but the enzyme has broad specificity at other positions. The protein is Peptide deformylase of Leptospira biflexa serovar Patoc (strain Patoc 1 / Ames).